Reading from the N-terminus, the 712-residue chain is Follistatin-like domain-containing protein DDB_G0289517 (712 aa).

The signal sequence occupies residues M1–S21. N102 carries N-linked (GlcNAc...) asparagine glycosylation. Residues D181 to C400 are disordered. Positions Q192–K203 are enriched in basic and acidic residues. Over residues K204 to D214 the composition is skewed to basic residues. 2 N-linked (GlcNAc...) asparagine glycosylation sites follow: N217 and N234. Low complexity predominate over residues D220–I251. Positions T254–D269 are enriched in polar residues. Low complexity predominate over residues Q270–Q281. Positions K301–R321 are enriched in polar residues. The span at K330–N339 shows a compositional bias: acidic residues. Over residues D352–H364 the composition is skewed to basic and acidic residues. N369 carries N-linked (GlcNAc...) asparagine glycosylation. Residues P374–E384 are compositionally biased toward acidic residues. Over residues P386–V395 the composition is skewed to polar residues. 2 Follistatin-like domains span residues P399 to K421 and T471 to Q494. Residue N407 is glycosylated (N-linked (GlcNAc...) asparagine). N505, N524, and N566 each carry an N-linked (GlcNAc...) asparagine glycan. The Follistatin-like 3 domain occupies S596 to K618. N622 carries N-linked (GlcNAc...) asparagine glycosylation. 2 consecutive Follistatin-like domains span residues S660–Y682 and E687–L710.

The protein localises to the secreted. This is Follistatin-like domain-containing protein DDB_G0289517 from Dictyostelium discoideum (Social amoeba).